A 972-amino-acid chain; its full sequence is Aminopeptidase Ey (972 aa).

Topologically, residues 2–10 (AAGFFISKS) are cytoplasmic. The chain crosses the membrane as a helical; Signal-anchor for type II membrane protein span at residues 11 to 31 (VGIVGIVLALGAVATIIALSV). The Extracellular portion of the chain corresponds to 32–972 (VYAQEKNKSS…AWFRAETASS (941 aa)). Residues 33-72 (YAQEKNKSSGGSGGSDTTSTTTASTTTTSTTTASTTAAPN) are cytosolic Ser/Thr-rich junction. The interval 37 to 77 (KNKSSGGSGGSDTTSTTTASTTTTSTTTASTTAAPNNPWNR) is disordered. Residue N38 is glycosylated (N-linked (GlcNAc...) asparagine). Positions 47-70 (SDTTSTTTASTTTTSTTTASTTAA) are enriched in low complexity. The metalloprotease stretch occupies residues 73–967 (NPWNRWRLPT…KEVVHAWFRA (895 aa)). Residues N110, N132, N147, N206, N269, and N296 are each glycosylated (N-linked (GlcNAc...) asparagine). Residue 355-359 (GAMEN) coordinates substrate. H391 is a binding site for Zn(2+). E392 functions as the Proton acceptor in the catalytic mechanism. 2 residues coordinate Zn(2+): H395 and E414. Residues N513, N574, N584, N628, N684, and N742 are each glycosylated (N-linked (GlcNAc...) asparagine). Cysteines 764 and 771 form a disulfide. The N-linked (GlcNAc...) asparagine glycan is linked to N785. C801 and C837 are joined by a disulfide.

Belongs to the peptidase M1 family. As to quaternary structure, homodimer. Requires Zn(2+) as cofactor. In terms of tissue distribution, detected in the plasma and granule fractions of egg yolk (at protein level).

The protein localises to the cell membrane. It carries out the reaction Differs from other aminopeptidases in broad specificity for amino acids in the P1 position and the ability to hydrolyze peptides of four or five residues that contain Pro in the P1' position.. In terms of biological role, broad specificity aminopeptidase. Degrades a variety of peptides possessing various N-terminal amino acids including hydrophobic, basic and acidic amino acids. Preferentially hydrolyzes small peptides consisting of 4 or 5 amino acids. Hydrolyzes the N-terminal Xaa-Pro bonds in the chicken brain peptide Leu-Pro-Leu-Arg-PheNH2, the substance P fragment Arg-Pro-Lys-Pro and the bradykinin fragment Arg-Pro-Pro-Gly-Phe. Hydrolyzes the N-formylated peptides fMet-Leu-Phe, fMet-Ala-Gly-Ser-Glu and fMet-Nle-Leu-Phe-Nle-Tyr-Lys, but does not hydrolyze peptides with acetylation or pyroglutamic acid at N-terminus. Does not hydrolyze large peptides such as complete substance P, bradykinin or schistoFLRFamide. In Gallus gallus (Chicken), this protein is Aminopeptidase Ey (ANPEP).